The following is a 343-amino-acid chain: Transmembrane protein 120A (343 aa).

The Cytoplasmic portion of the chain corresponds to 1-135 (MQSPPPDPLG…KFAYKDEYEK (135 aa)). Residue Lys130 coordinates CoA. Residues 136–156 (FKLYLTIILIVISFTCRFLLN) traverse the membrane as a helical segment. The Extracellular segment spans residues 157-162 (SRVTDA). Residues 163–183 (AFNFLLVWYYCTLTIRESILI) form a helical membrane-spanning segment. The Cytoplasmic segment spans residues 184–190 (NNGSRIK). CoA is bound by residues Ser187 and Arg188. Residues 191–211 (GWWVFHHYVSTFLSGVMLTWP) form a helical membrane-spanning segment. Topologically, residues 212–222 (DGLMYQKFRNQ) are extracellular. Residues 223–240 (FLSFSMYQSFVQFLQYYY) traverse the membrane as a helical segment. Gln237, Tyr240, Gln241, and His283 together coordinate CoA. Over 241 to 273 (QSGCLYRLRALGERHTMDLTVEGFQSWMWRGLT) the chain is Cytoplasmic. The helical transmembrane segment at 274–294 (FLLPFLFFGHFWQLFNALTLF) threads the bilayer. The Extracellular segment spans residues 295-305 (NLARDPECKEW). A helical transmembrane segment spans residues 306 to 326 (QVLMCGFPFLLLFLGNFFTTL). The Cytoplasmic segment spans residues 327 to 343 (RVVHQKFHSQQHGNKKD). Position 332 (Lys332) interacts with CoA.

It belongs to the TMEM120 family. Homodimer. Forms heterooligomer with TMEM120B. Interacts with PKD2; TMEM120A inhibits PKD2 channel activity through the physical association of PKD2 with TMEM120A. In terms of tissue distribution, widely expressed, with higher expression in the heart, kidneys, colon and sensory neurons of the dorsal root ganglia. Expressed in nociceptors. Highly expressed in white adipose tissue (at protein level). Highly expressed in brown adipose tissue and expressed at low levels in liver.

The protein resides in the cell membrane. Its subcellular location is the nucleus envelope. It is found in the nucleus inner membrane. It localises to the endoplasmic reticulum. In terms of biological role, multifunctional protein involved in mechanosensation, and plays an essential role in lipid metabolism and adipocyte differentiation. May function as a potential ion channel involved in sensing mechanical stimuli. Mediates the mechanosensitivity of the PKD2-TMEM120A channel complex through direct physical interaction. TMEM120A seems to affect mechanosensation by inhibiting PIEZO2 channels, possibly by altering cellular lipid content. TMEM120A is structurally similar to a lipid-modifying enzyme, ELOVL7, and contains a bound coenzyme A molecule, which suggests it might function as an enzyme in lipid metabolism. The chain is Transmembrane protein 120A from Mus musculus (Mouse).